A 440-amino-acid polypeptide reads, in one-letter code: Thymidine phosphorylase (440 aa).

This sequence belongs to the thymidine/pyrimidine-nucleoside phosphorylase family. As to quaternary structure, homodimer.

The enzyme catalyses thymidine + phosphate = 2-deoxy-alpha-D-ribose 1-phosphate + thymine. Its pathway is pyrimidine metabolism; dTMP biosynthesis via salvage pathway; dTMP from thymine: step 1/2. Functionally, the enzymes which catalyze the reversible phosphorolysis of pyrimidine nucleosides are involved in the degradation of these compounds and in their utilization as carbon and energy sources, or in the rescue of pyrimidine bases for nucleotide synthesis. This Escherichia coli (strain K12 / DH10B) protein is Thymidine phosphorylase.